Reading from the N-terminus, the 360-residue chain is UDP-N-acetylglucosamine--N-acetylmuramyl-(pentapeptide) pyrophosphoryl-undecaprenol N-acetylglucosamine transferase (360 aa).

Residues 12 to 14 (TAG), S198, and Q289 contribute to the UDP-N-acetyl-alpha-D-glucosamine site.

Belongs to the glycosyltransferase 28 family. MurG subfamily.

The protein resides in the cell membrane. It catalyses the reaction Mur2Ac(oyl-L-Ala-gamma-D-Glu-L-Lys-D-Ala-D-Ala)-di-trans,octa-cis-undecaprenyl diphosphate + UDP-N-acetyl-alpha-D-glucosamine = beta-D-GlcNAc-(1-&gt;4)-Mur2Ac(oyl-L-Ala-gamma-D-Glu-L-Lys-D-Ala-D-Ala)-di-trans,octa-cis-undecaprenyl diphosphate + UDP + H(+). Its pathway is cell wall biogenesis; peptidoglycan biosynthesis. Functionally, cell wall formation. Catalyzes the transfer of a GlcNAc subunit on undecaprenyl-pyrophosphoryl-MurNAc-pentapeptide (lipid intermediate I) to form undecaprenyl-pyrophosphoryl-MurNAc-(pentapeptide)GlcNAc (lipid intermediate II). In Streptococcus equi subsp. equi (strain 4047), this protein is UDP-N-acetylglucosamine--N-acetylmuramyl-(pentapeptide) pyrophosphoryl-undecaprenol N-acetylglucosamine transferase.